We begin with the raw amino-acid sequence, 1775 residues long: MQGPSQLALFYFANGLPPDDIQDLFQRLRSQSKTESGWTLRAFVVQATNALREEIRQLPHHLRNPLTPLDNALDLAVVPDWRRGPLAGALEGVLLCLIEIGSLIAYYERTPDPFKFSARTACFTGIGTGLLAAAAAAASPTLADLPRLGAAAVRIALRMGVLVAETSQSVEAREPDAPADNWAAVVMDLDEDTVREELNLFNASTNNLGPSRLFISAGGTDNVTISGPPSKLRQVFRVSEKLRSARYAQLPVYGGLCHAPHLYNCHHWTWIMEPINGAAFNQNMVDTAPLFSAGDDVPFEASTPRQLFESVVCDLLMGMIRWNRAVDGVVELLGQTLPSECQVYAFRPCAVVTGMVASGQVKLPHCQFQTHDLLGWTCHDDTDNGPTCREDSSIAIVGMACRFPGGANDLNQFWDLLEQGADVHRRVPADRYDVESHTDTSGKSRNTSLTPFGCFIDQPGLFDAGFFDMSPREAMQTDPMHRLALMTAYEALEQAGFVPNRTESTHLKRIGTFYGQSCDDYREANAGQEVDTYYIPGGCRAFAPGRINYFFKFSGPSFDCDTACSSSLATIQMACTSLQHGDTNMAVAGGLNILTNSDGFAGLSRGHFLSKTGGCKTFDCNADGYCRADGIGSIVLKRLDDAQRDNDHIFGIILAAATNHSARAISITHPHAPSQAELYRDILTRAGVSPLDVDFIEMHGTGTQAGDSTEMESITSVFSPGVPKRSRPLYIGSVKANVGHGEAAAGVMSLIKVLLVLQRQAIPKHVGIKTALNPRFPNLDRLNVRIPHDQVPWPRSPTRKRYALVNNFSAAGGNTSLLIEEPPVRPEPKADPRAAFTVAVSAKSKASLKNNLRSFLAYLESQPSISLAHLSYTTTARRMHHNHRIAVHGSTLSSIMQELEPYLPAVDTHRPVPNTPPSIAFVFSGQGSFYTGIARQLYEHHPGFRLQITRLHNICLSHGFPSFRRAITGDLSNDGSEAEPIITHLTIVCVSIALCRLWETLGVKPCVVAGASLGEFAALYAAGVLSASDAIYLVGRRAQLLQELCTPNTHAMLAVRATVEQIRNVLAGQPYEVACINGSSDITLSCSVADIINLQLAIEQHGYKCTRLDVPFAFHSAQMDPLLGPFEHIARGVTFKAPNIPVMSPSLGDCVFDGKTINASYMCNVTRNPVKFVDALETARGMDLVDAKTVWVEIGPHASYSRFVGSAMPPGTATIASLNRNEDNWSTFARSMAQLHNLGVDLNWHEWHAPFESELRLLTDLPAYQWNMKNYWIQYNGDWMLRKDGKSSAAAASHPHQAIPPALRTSLVHRLVCESVQETRVEVIVESDILHPDFFEAMNGHRMNGCAVATTAIHADIAFTLAKYLYSSIMPNSTDAPAINVKNMQVQHGLVARKDRSRPQLIRIRGIADVTRGLVSLSWHLVDEQGRRVEESFATAVAEFGNHEAWLEEWSPMTHLVVSRIDVLQRLADDGTANRLSRDMVYMLFNNLVDYAEKYRGMQMVVLHGLEAMANVTLAAPEQSGGKWTVAPHYIDSVVHLAGFILNGGNGLDPRRNFYVTPGWKSMRFARPLVPGVRYQSYVKMMPIREQSGFYAGDVYILHEGQIVGLVGGITFRTFPRSLINTFFSPPDTMTHGGSQAGSVHQPACSERTLPVGPARQDSAARETLCQGHGLSRTVMDSSDSSPATTLTPPTLPSVAASTESPIVHRAMALIAAETAIELTELSDETAFSSIGVDSLLSLVLAEKFTAEFHLDFRSSLFLDCPTIGDLKAWLIDYC.

The segment at 29–258 (RSQSKTESGW…QLPVYGGLCH (230 aa)) is N-terminal acylcarrier protein transacylase domain (SAT). Residues 391 to 821 (DSSIAIVGMA…GGNTSLLIEE (431 aa)) enclose the Ketosynthase family 3 (KS3) domain. Catalysis depends on for beta-ketoacyl synthase activity residues C564, H699, and H740. A malonyl-CoA:ACP transacylase (MAT) domain region spans residues 921 to 1241 (FVFSGQGSFY…MAQLHNLGVD (321 aa)). A product template (PT) domain region spans residues 1305–1626 (TSLVHRLVCE…RSLINTFFSP (322 aa)). The segment at 1309–1455 (HRLVCESVQE…WLEEWSPMTH (147 aa)) is N-terminal hotdog fold. Residues 1309–1621 (HRLVCESVQE…FRTFPRSLIN (313 aa)) form the PKS/mFAS DH domain. Catalysis depends on H1341, which acts as the Proton acceptor; for dehydratase activity. Residues 1472–1621 (TANRLSRDMV…FRTFPRSLIN (150 aa)) form a C-terminal hotdog fold region. The active-site Proton donor; for dehydratase activity is D1532. The interval 1672–1694 (SRTVMDSSDSSPATTLTPPTLPS) is disordered. The segment covering 1677 to 1689 (DSSDSSPATTLTP) has biased composition (low complexity). In terms of domain architecture, Carrier spans 1698 to 1775 (STESPIVHRA…DLKAWLIDYC (78 aa)). An O-(pantetheine 4'-phosphoryl)serine modification is found at S1735.

Endocrocin is specifically produced in conidia.

The catalysed reaction is holo-[ACP] + 8 malonyl-CoA + 8 H(+) = atrochrysone carboxyl-[ACP] + 8 CO2 + 8 CoA + 2 H2O. The protein operates within secondary metabolite biosynthesis. Its function is as follows. Non-reducing polyketide synthase; part of the gene cluster that mediates the biosynthesis of endocrocin, a simple anthraquinone interesting for many biotechnological applications. The pathway begins with the synthesis of atrochrysone thioester by the polyketide synthase (PKS) encA. The atrochrysone carboxyl ACP thioesterase encB then breaks the thioester bond and releases the atrochrysone carboxylic acid from encA. The atrochrysone carboxylic acid is then converted to endocrocin anthrone which is further oxidized into endocrocin by the anthrone oxygenase encC. The exact function of encD has not been identified yet, but it negatively regulates endocrocin production, likely through the modification of endocrocin itself. This chain is Atrochrysone carboxylic acid synthase, found in Aspergillus fumigatus (strain ATCC MYA-4609 / CBS 101355 / FGSC A1100 / Af293) (Neosartorya fumigata).